The chain runs to 143 residues: Peptide methionine sulfoxide reductase MsrB (143 aa).

One can recognise a MsrB domain in the interval aspartate 16 to lysine 139. Residues cysteine 55, cysteine 58, cysteine 104, and cysteine 107 each contribute to the Zn(2+) site. The active-site Nucleophile is the cysteine 128.

Belongs to the MsrB Met sulfoxide reductase family. Requires Zn(2+) as cofactor.

The catalysed reaction is L-methionyl-[protein] + [thioredoxin]-disulfide + H2O = L-methionyl-(R)-S-oxide-[protein] + [thioredoxin]-dithiol. In Burkholderia mallei (strain NCTC 10229), this protein is Peptide methionine sulfoxide reductase MsrB.